Reading from the N-terminus, the 267-residue chain is Pro-opiomelanocortin (267 aa).

The N-terminal stretch at 1–26 (MPRSCCSRSGALLLALLLQASMEVRG) is a signal peptide. A disulfide bridge links Cys-28 with Cys-50. Thr-71 carries O-linked (HexNAc...) threonine glycosylation. Residue Phe-87 is modified to Phenylalanine amide. Disordered regions lie at residues 88–175 (GRRN…FPLE), 181–200 (TGQR…DGAG), and 222–241 (RMEH…GGFM). The N-linked (GlcNAc...) asparagine glycan is linked to Asn-91. The span at 121-145 (PEPRSDGAKPGPREGKRSYSMEHFR) shows a compositional bias: basic and acidic residues. Glu-134 carries the post-translational modification Glutamic acid 1-amide. N-acetylserine; in Corticotropin is present on Ser-138. A Valine amide modification is found at Val-150. Phosphoserine is present on Ser-168. Over residues 222–237 (RMEHFRWGSPPKDKRY) the composition is skewed to basic and acidic residues.

It belongs to the POMC family. In terms of processing, specific enzymatic cleavages at paired basic residues yield the different active peptides. O-glycosylated; reducing sugar is probably N-acetylgalactosamine. ACTH and MSH are produced by the pituitary gland.

It localises to the secreted. Stimulates the adrenal glands to release cortisol. Its function is as follows. Anorexigenic peptide. Increases the pigmentation of skin by increasing melanin production in melanocytes. Functionally, increases the pigmentation of skin by increasing melanin production in melanocytes. In terms of biological role, endogenous orexigenic opiate. Endogenous opiate. This chain is Pro-opiomelanocortin (POMC), found in Homo sapiens (Human).